The chain runs to 901 residues: Alpha-actinin-3 (901 aa).

M1 bears the N-acetylmethionine mark. The interval 1–261 (MMMVMQPEGL…IMTYVSCFYH (261 aa)) is actin-binding. Calponin-homology (CH) domains follow at residues 45 to 149 (KQQR…LRFA) and 158 to 264 (TSAK…HAFA). 4 Spectrin repeats span residues 288-398 (KLME…WLLS), 408-513 (HLAE…ALER), 523-634 (RLQL…TLQE), and 644-747 (RLRR…EVEN). EF-hand domains follow at residues 760-795 (EQLN…MGYD) and 796-831 (LGEV…ETAE). Residues D773, N777, M779, D784, D809, and N811 each contribute to the Ca(2+) site.

Belongs to the alpha-actinin family. Homodimer; antiparallel. Also forms heterodimers with ACTN2. Interacts with MYOZ1. In terms of tissue distribution, expression restricted to fast (type 2) skeletal muscle fibers (at protein level).

Functionally, F-actin cross-linking protein which is thought to anchor actin to a variety of intracellular structures. This is a bundling protein. The polypeptide is Alpha-actinin-3 (ACTN3) (Homo sapiens (Human)).